A 365-amino-acid polypeptide reads, in one-letter code: Carboxynorspermidine/carboxyspermidine decarboxylase (365 aa).

At lysine 37 the chain carries N6-(pyridoxal phosphate)lysine. Glutamate 233 and aspartate 269 together coordinate substrate.

This sequence belongs to the Orn/Lys/Arg decarboxylase class-II family. NspC subfamily. As to quaternary structure, homodimer. The cofactor is pyridoxal 5'-phosphate.

Its subcellular location is the cytoplasm. It carries out the reaction carboxynorspermidine + H(+) = norspermidine + CO2. The enzyme catalyses carboxyspermidine + H(+) = spermidine + CO2. Catalyzes the decarboxylation of carboxynorspermidine and carboxyspermidine. The protein is Carboxynorspermidine/carboxyspermidine decarboxylase of Herminiimonas arsenicoxydans.